The following is a 1029-amino-acid chain: Beta-galactosidase (1029 aa).

2 residues coordinate substrate: asparagine 108 and aspartate 207. Aspartate 207 contributes to the Na(+) binding site. Positions 422, 424, and 467 each coordinate Mg(2+). Substrate is bound by residues glutamate 467 and 543-546 (EYAH). Residue glutamate 467 is the Proton donor of the active site. Residue glutamate 543 is the Nucleophile of the active site. Asparagine 603 lines the Mg(2+) pocket. Residues phenylalanine 607 and asparagine 610 each coordinate Na(+). The substrate site is built by asparagine 610 and tryptophan 1005.

This sequence belongs to the glycosyl hydrolase 2 family. In terms of assembly, homotetramer. Mg(2+) serves as cofactor. The cofactor is Na(+).

It carries out the reaction Hydrolysis of terminal non-reducing beta-D-galactose residues in beta-D-galactosides.. The chain is Beta-galactosidase from Escherichia coli.